Reading from the N-terminus, the 471-residue chain is Elongation factor 1-alpha (471 aa).

The region spanning 10 to 239 (KPRLNACFIG…EALNYQDVPE (230 aa)) is the tr-type G domain. The segment at 19-26 (GHVDSGKS) is G1. GTP is bound at residue 19 to 26 (GHVDSGKS). The segment at 75–79 (GITIT) is G2. The segment at 96-99 (DCPG) is G3. GTP contacts are provided by residues 96–100 (DCPGH) and 156–159 (NKMD). Residues 156-159 (NKMD) form a G4 region. The segment at 196 to 198 (SAF) is G5.

Belongs to the TRAFAC class translation factor GTPase superfamily. Classic translation factor GTPase family. EF-Tu/EF-1A subfamily. In terms of assembly, component of the eukaryotic elongation factor 1 complex (eEF1).

The protein localises to the cytoplasm. Its pathway is protein biosynthesis; polypeptide chain elongation. Functionally, GTP-binding component of the eukaryotic elongation factor 1 complex (eEF1). In its active GTP-bound form, binds to and delivers aminoacyl-tRNA to the A-site of ribosomes during protein biosynthesis. In the presence of a correct codon-anticodon match between the aminoacyl-tRNA and the A-site codon of the ribosome-bound mRNA, the ribosome acts as a GTPase activator and the GTP is hydrolyzed. The inactive GDP-bound form leaves the ribosome and must be recycled by its guanine nucleotide exchange factor (GEF) (eEF1B subcomplex) before binding another molecule of aminoacyl-tRNA. Required for nuclear export of aminoacyl-tRNAs. May also be involved in translational quality control by targeting cotranslationally damaged proteins to the proteasome. The polypeptide is Elongation factor 1-alpha (TEF1) (Encephalitozoon cuniculi (strain GB-M1) (Microsporidian parasite)).